A 474-amino-acid chain; its full sequence is tRNA-2-methylthio-N(6)-dimethylallyladenosine synthase (474 aa).

In terms of domain architecture, MTTase N-terminal spans K3–G120. Positions 12, 49, 83, 157, 161, and 164 each coordinate [4Fe-4S] cluster. In terms of domain architecture, Radical SAM core spans R143–A375. The 64-residue stretch at R378 to R441 folds into the TRAM domain.

Belongs to the methylthiotransferase family. MiaB subfamily. Monomer. It depends on [4Fe-4S] cluster as a cofactor.

The protein resides in the cytoplasm. It catalyses the reaction N(6)-dimethylallyladenosine(37) in tRNA + (sulfur carrier)-SH + AH2 + 2 S-adenosyl-L-methionine = 2-methylsulfanyl-N(6)-dimethylallyladenosine(37) in tRNA + (sulfur carrier)-H + 5'-deoxyadenosine + L-methionine + A + S-adenosyl-L-homocysteine + 2 H(+). In terms of biological role, catalyzes the methylthiolation of N6-(dimethylallyl)adenosine (i(6)A), leading to the formation of 2-methylthio-N6-(dimethylallyl)adenosine (ms(2)i(6)A) at position 37 in tRNAs that read codons beginning with uridine. This chain is tRNA-2-methylthio-N(6)-dimethylallyladenosine synthase, found in Citrobacter koseri (strain ATCC BAA-895 / CDC 4225-83 / SGSC4696).